The primary structure comprises 1052 residues: Eukaryotic translation initiation factor 3 subunit A (1052 aa).

The 181-residue stretch at 325–505 (IQYAASAVLL…GSLHFNNNIF (181 aa)) folds into the PCI domain. Coiled-coil stretches lie at residues 568–712 (REHV…RLRE) and 769–882 (EKTA…SAQT). Basic and acidic residues-rich tracts occupy residues 570 to 600 (HVSN…EQMQ) and 793 to 874 (KIRL…EQEK). Disordered regions lie at residues 570–606 (HVSN…HQNQ) and 793–1052 (KIRL…DDKN). Composition is skewed to polar residues over residues 875–887 (LSNL…QPTW) and 895–906 (APTTAAPSSMRV). Composition is skewed to basic and acidic residues over residues 942-952 (DRGDRAPRDTG), 960-970 (DRGDRAPRDTG), 979-1013 (RAPR…ERRA), and 1037-1052 (GSER…DDKN).

This sequence belongs to the eIF-3 subunit A family. Component of the eukaryotic translation initiation factor 3 (eIF-3) complex.

It is found in the cytoplasm. In terms of biological role, RNA-binding component of the eukaryotic translation initiation factor 3 (eIF-3) complex, which is involved in protein synthesis of a specialized repertoire of mRNAs and, together with other initiation factors, stimulates binding of mRNA and methionyl-tRNAi to the 40S ribosome. The eIF-3 complex specifically targets and initiates translation of a subset of mRNAs involved in cell proliferation. The protein is Eukaryotic translation initiation factor 3 subunit A of Monosiga brevicollis (Choanoflagellate).